A 108-amino-acid chain; its full sequence is UPF0060 membrane protein YnfA (108 aa).

Topologically, residues 1–5 (MFKTT) are periplasmic. Residues 6-26 (LLFFITALCEIIGCFLPWLWL) form a helical membrane-spanning segment. The Cytoplasmic segment spans residues 27-30 (KRNG). A helical transmembrane segment spans residues 31-51 (SIWLLLPAGVSLAFFVWLLTL). Topologically, residues 52-60 (HPAASGRVY) are periplasmic. The helical transmembrane segment at 61–81 (AAYGGVYVCTALLWLRFIDGV) threads the bilayer. Residues 82–84 (KLS) lie on the Cytoplasmic side of the membrane. The helical transmembrane segment at 85-105 (LYDWSGALIALCGMLIIVAGW) threads the bilayer. Over 106–108 (GRA) the chain is Periplasmic.

It belongs to the UPF0060 family.

The protein localises to the cell inner membrane. This Escherichia fergusonii (strain ATCC 35469 / DSM 13698 / CCUG 18766 / IAM 14443 / JCM 21226 / LMG 7866 / NBRC 102419 / NCTC 12128 / CDC 0568-73) protein is UPF0060 membrane protein YnfA.